The sequence spans 157 residues: MDRFNCILNDTEYIYYLKRNKKFEKDRKFCKHNLKHFLDVARIAQLINLEESLGFNKEIIYTTAILHDIGKSLQYENGTPHEISSWEISKEILHNYRYNEEEIEIIKQGILGHRDKKSENFAQLMYRADKLSRLCISCKSIDECNWGDEKKNFKIYY.

The HD domain occupies 33 to 134 (NLKHFLDVAR…MYRADKLSRL (102 aa)).

This is an uncharacterized protein from Clostridium beijerinckii (strain ATCC 51743 / NCIMB 8052) (Clostridium acetobutylicum).